We begin with the raw amino-acid sequence, 667 residues long: Protein-glutamine gamma-glutamyltransferase 4 (667 aa).

3 N-linked (GlcNAc...) asparagine glycosylation sites follow: asparagine 151, asparagine 220, and asparagine 227. Active-site residues include cysteine 256, histidine 315, and aspartate 338. Ca(2+)-binding residues include asparagine 378 and aspartate 380. Asparagine 408 carries N-linked (GlcNAc...) asparagine glycosylation. Residues glutamate 430 and glutamate 435 each coordinate Ca(2+). Residues 430 to 449 (EGSPEERKAMEKASGKRPDD) are disordered. 2 N-linked (GlcNAc...) asparagine glycosylation sites follow: asparagine 472 and asparagine 488.

It belongs to the transglutaminase superfamily. Transglutaminase family. Homodimer. Requires Ca(2+) as cofactor. The N-terminus is blocked. In terms of processing, probably linked to the cell membrane via a lipid-anchor, possibly a GPI-anchor. Post-translationally, N-glycosylated on 2 Asn residues by a high mannose oligosaccharide consisting of five mannose residues and a fucosylated biantennary complex glycan. Expressed in the coagulating gland, the dorsal part of the prostate and in semen (at protein level). Expressed at low levels in the lateral prostate and seminal vesicle. Not expressed in the epididymis, kidney, liver, serum, sperm plug, testes and ventral prostate.

It localises to the secreted. It is found in the cell membrane. The catalysed reaction is L-glutaminyl-[protein] + L-lysyl-[protein] = [protein]-L-lysyl-N(6)-5-L-glutamyl-[protein] + NH4(+). Functionally, associated with the mammalian reproductive process. Plays an important role in the formation of the seminal coagulum through the cross-linking of specific proteins present in the seminal plasma. Transglutaminase is also required to stabilize the copulatory plug. This chain is Protein-glutamine gamma-glutamyltransferase 4 (Tgm4), found in Rattus norvegicus (Rat).